A 93-amino-acid chain; its full sequence is Conotoxin F_Vc1 (93 aa).

The N-terminal stretch at 1-22 (MQRGAVLLGVVAFLALWPQAGA) is a signal peptide. The propeptide occupies 23–33 (EPYNLNDPDVR).

Belongs to the conotoxin F superfamily. Contains 4 disulfide bonds. Expressed by the venom duct.

The protein localises to the secreted. In Conus victoriae (Queen Victoria cone), this protein is Conotoxin F_Vc1.